A 323-amino-acid polypeptide reads, in one-letter code: MGSRVSREEFEWVYTDQPHAARRKEILAKYPEIKSLMKPDHNLIWIVAMMLLVQLASFYLVKDLDWKWVIFWSYVFGSCLNHSMTLAIHEISHNFPFGHHKALWNRWFGMFANLSLGVPYSISFKRYHMDHHRYLGADKIDVDIPTDFEGWFFCTTFRKFVWVILQPLFYAFRPLFINPKPITYLEIINTVIQITFDIIIYYVFGVKSLVYMLAATLLGLGLHPISGHFIAEHYMFLKGHETYSYYGPLNLLTFNVGYHNEHHDFPNVPGKNLPMVRKIASEYYDDLPHYNSWIKVLYDFVTDDTISPYSRMKRPPKGNEILE.

The N-myristoyl glycine moiety is linked to residue Gly-2. The next 2 membrane-spanning stretches (helical) occupy residues 41–61 (HNLIWIVAMMLLVQLASFYLV) and 68–88 (WVIFWSYVFGSCLNHSMTLAI). The Histidine box-1 signature appears at 89-93 (HEISH). Residues 104-124 (WNRWFGMFANLSLGVPYSISF) traverse the membrane as a helical segment. A Histidine box-2 motif is present at residues 128–132 (HMDHH). Transmembrane regions (helical) follow at residues 152 to 172 (FFCTTFRKFVWVILQPLFYAF), 184 to 204 (YLEIINTVIQITFDIIIYYVF), and 209 to 229 (LVYMLAATLLGLGLHPISGHF). The short motif at 259–263 (HNEHH) is the Histidine box-3 element. Ser-307 is subject to Phosphoserine.

The protein belongs to the fatty acid desaturase type 1 family. DEGS subfamily. Interacts with RLBP1; the interaction increases synthesis of chromophore-precursors by DEGS1. In terms of processing, myristoylation can target the enzyme to the mitochondria leading to an increase in ceramide levels. As to expression, detected in testis. Detected in pachytene spermatocytes and round spermatids. Expressed in retina and retinal pigment epithelium by Mueller cells (at protein level).

The protein localises to the mitochondrion membrane. It is found in the endoplasmic reticulum membrane. It catalyses the reaction an N-acylsphinganine + 2 Fe(II)-[cytochrome b5] + O2 + 2 H(+) = an N-acylsphing-4-enine + 2 Fe(III)-[cytochrome b5] + 2 H2O. The catalysed reaction is all-trans-retinol = 11-cis-retinol. It carries out the reaction all-trans-retinol = 9-cis-retinol. The enzyme catalyses all-trans-retinol = 13-cis-retinol. It catalyses the reaction 11-cis-retinol = 13-cis-retinol. The catalysed reaction is 11-cis-retinol = 9-cis-retinol. Functionally, has sphingolipid-delta-4-desaturase activity. Converts D-erythro-sphinganine to D-erythro-sphingosine (E-sphing-4-enine). Catalyzes the equilibrium isomerization of retinols. The polypeptide is Sphingolipid delta(4)-desaturase DES1 (Mus musculus (Mouse)).